The sequence spans 1750 residues: Brefeldin A-inhibited guanine nucleotide-exchange protein 3 (1750 aa).

Ala-2 is subject to N-acetylalanine. Disordered stretches follow at residues 44-65 and 565-596; these read LRSP…IPGP and EEGS…SSGN. Positions 47-61 are enriched in polar residues; it reads PENSSPVADSESGSS. Over residues 565-588 the composition is skewed to basic and acidic residues; the sequence is EEGSHPVENGKGDGGHGGFERSDS. Phosphoserine is present on Ser-586. The SEC7 domain maps to 601–788; it reads AIEQRRAYKL…RALYERISRN (188 aa). Glu-703 is a catalytic residue. A Phosphoserine modification is found at Ser-1307.

In terms of assembly, homodimer.

Its subcellular location is the cytoplasm. It localises to the cytosol. The protein localises to the membrane. Inhibited by brefeldin A. Its function is as follows. Activates the ARF proteins by exchanging bound GDP for free GTP. Plays a role in vesicular protein sorting. Involved both in the nuclear division phase and in the nuclear fusion phase. The chain is Brefeldin A-inhibited guanine nucleotide-exchange protein 3 (BIG3) from Arabidopsis thaliana (Mouse-ear cress).